Here is a 253-residue protein sequence, read N- to C-terminus: MVSSFTSAPRSGFYYFAQGWKLVSQPRIRRFVILPLLVNILLMGGAFWWLFTQLDVWIPTLMSYVPDWLQWLSYLLWPLAVISVLLVFGYFFSTIANWIAAPFNGLLAEQLEARLTGATPPDTGIFGIMKDVPRIMKREWQKFAWYLPRAIVLLILYFIPGIGQTVAPVLWFLFSAWMLAIQYCDYPFDNHKVPFKEMRTALRTRKITNMQFGALTSLFTMIPLLNLFIMPVAVCGATAMWVDCYRDKHAMWR.

4 consecutive transmembrane segments (helical) span residues 31–51, 75–95, 151–171, and 222–242; these read FVIL…WWLF, LLWP…FSTI, IVLL…PVLW, and IPLL…AMWV.

This sequence belongs to the CysZ family.

It is found in the cell inner membrane. High affinity, high specificity proton-dependent sulfate transporter, which mediates sulfate uptake. Provides the sulfur source for the cysteine synthesis pathway. This is Sulfate transporter CysZ from Shigella dysenteriae serotype 1 (strain Sd197).